The following is a 207-amino-acid chain: Ras-related protein RABH1d (207 aa).

G16–T23 serves as a coordination point for GTP. Residues Y38–F46 carry the Effector region motif. GTP is bound by residues D64–Q68, N122–D125, and S152–A153. Residues C205 and C207 are each lipidated (S-geranylgeranyl cysteine). A Cysteine methyl ester modification is found at C207.

This sequence belongs to the small GTPase superfamily. Rab family.

The protein localises to the golgi apparatus membrane. Functionally, protein transport. Regulator of membrane traffic from the Golgi apparatus towards the endoplasmic reticulum (ER). This Arabidopsis thaliana (Mouse-ear cress) protein is Ras-related protein RABH1d (RABH1D).